Here is a 167-residue protein sequence, read N- to C-terminus: Ribosome maturation factor RimM (167 aa).

The PRC barrel domain maps to 94 to 165 (ENEFYYSDII…KIIITPMEGL (72 aa)).

This sequence belongs to the RimM family. As to quaternary structure, binds ribosomal protein uS19.

It is found in the cytoplasm. An accessory protein needed during the final step in the assembly of 30S ribosomal subunit, possibly for assembly of the head region. Essential for efficient processing of 16S rRNA. May be needed both before and after RbfA during the maturation of 16S rRNA. It has affinity for free ribosomal 30S subunits but not for 70S ribosomes. This is Ribosome maturation factor RimM from Staphylococcus aureus (strain Mu3 / ATCC 700698).